The sequence spans 297 residues: E3 ubiquitin-protein ligase RNF212B (297 aa).

The RING-type zinc finger occupies 6–40; that stretch reads CNQCFRKDGAHFFVTSCGHIFCKKCMTLEKCAVCG. Positions 87–136 form a coiled coil; it reads LLIAFYKDRITKLEAAVKEAQEMAASQNKELSALRKENGELKKILDILKG. Disordered regions lie at residues 152-179 and 198-269; these read VGITSPSQSVAPRPSSHHSSQVVSRSSS and RGLH…ESLP. A compositionally biased stretch (low complexity) spans 163 to 179; the sequence is PRPSSHHSSQVVSRSSS. Polar residues predominate over residues 206-234; sequence PGDSYTETPSPASTHSLSYRPSSASSGQG.

Homodimer. Autoubiquitinated.

The protein localises to the chromosome. The catalysed reaction is S-ubiquitinyl-[E2 ubiquitin-conjugating enzyme]-L-cysteine + [acceptor protein]-L-lysine = [E2 ubiquitin-conjugating enzyme]-L-cysteine + N(6)-ubiquitinyl-[acceptor protein]-L-lysine.. It participates in protein modification; protein ubiquitination. In terms of biological role, ubiquitin E3 ligase that acts as a crucial factor for crossing-over (CO) formation during meiosis. Essential for normal prophase I progression and for ensuring appropriate CO designation in meiosis. Recruits key components of the cross-over machinery either directly ou indirectly, leading to the activation of the MutL-gamma complex. The function of RNF212B in CO designation is dependent on its catalytic activity. The polypeptide is E3 ubiquitin-protein ligase RNF212B (Rnf212b) (Mus musculus (Mouse)).